The primary structure comprises 318 residues: Acetyl-coenzyme A carboxylase carboxyl transferase subunit alpha (318 aa).

The CoA carboxyltransferase C-terminal domain maps to 41–295 (RLTTKSQELT…KRQLIADLGS (255 aa)).

Belongs to the AccA family. Acetyl-CoA carboxylase is a heterohexamer composed of biotin carboxyl carrier protein (AccB), biotin carboxylase (AccC) and two subunits each of ACCase subunit alpha (AccA) and ACCase subunit beta (AccD).

The protein localises to the cytoplasm. It catalyses the reaction N(6)-carboxybiotinyl-L-lysyl-[protein] + acetyl-CoA = N(6)-biotinyl-L-lysyl-[protein] + malonyl-CoA. Its pathway is lipid metabolism; malonyl-CoA biosynthesis; malonyl-CoA from acetyl-CoA: step 1/1. Its function is as follows. Component of the acetyl coenzyme A carboxylase (ACC) complex. First, biotin carboxylase catalyzes the carboxylation of biotin on its carrier protein (BCCP) and then the CO(2) group is transferred by the carboxyltransferase to acetyl-CoA to form malonyl-CoA. This Idiomarina loihiensis (strain ATCC BAA-735 / DSM 15497 / L2-TR) protein is Acetyl-coenzyme A carboxylase carboxyl transferase subunit alpha.